The sequence spans 644 residues: MVKLGKKEQQKYRTEGYDLDFISRVQPQGGIKFNEKYIAQGDCYVACLHVYSLAEDIPPLWLTALMNNKDTISSVDVATANKEEVVKDINRSITELKDRMTSERRSTDRDDAHWELQNLTDFARSITQQGEIVKLVKLRIYIYDPVLEQLEKRIGDIKKEIAGQNYKAQVYVFKQKEEWQTLFASYDDQIEYLGVKSGYPLPSKNIGFGIPFHHQDLKDPRGIYLGQTSTGGAFILDPFFSTGTRTSFSGFIFGKMGAGKSTLLKQLEEGLVAKDCFIRGFDKARDYYTVVQQQGGKIIDLSGVQDSEEVETGMINPLEVFATKITNTGAVDEKGSFIQHISKVTNMIRFLNTEFDDTVIQEFRKHLYAFYIEWGLVPQKGSDRPYKVTGYPPNHYPILEDFYKYLSNLKLEAGATPQRHRDLEAIKLQVEDMITVYGDMFNGHTTLKNFENEQIVFFDIDGISKYDKSVFNCQLFTALTLIWSHALKNGRQMKYLREEKNLSIEDVKYFMVFLDECHNVINSQNEFANRYVLEFEREMRKFFAGIFFATQSPQEMLPPPGSTVDVSTMKAIFELTQYKIFLNMDNSVLETLKSVLGESLTESEFRILPELKRGEAIVQVSSTETYNVMFDPDEKQLERFKGGQ.

An ATP-binding site is contributed by 254–261; it reads GKMGAGKS.

This is an uncharacterized protein from Bacillus anthracis.